The primary structure comprises 406 residues: uncharacterized protein (406 aa).

This sequence belongs to the glycosyltransferase group 1 family. Glycosyltransferase 4 subfamily.

This is an uncharacterized protein from Methanocaldococcus jannaschii (strain ATCC 43067 / DSM 2661 / JAL-1 / JCM 10045 / NBRC 100440) (Methanococcus jannaschii).